Here is a 128-residue protein sequence, read N- to C-terminus: Small ribosomal subunit protein eS8 (128 aa).

The segment at 1-37 is disordered; it reads MGYFQGNDFRKITGGKKGKHRDKRKFELGSPPTETKL. A compositionally biased stretch (basic residues) spans 13 to 23; sequence TGGKKGKHRDK.

Belongs to the eukaryotic ribosomal protein eS8 family. Part of the 30S ribosomal subunit.

This is Small ribosomal subunit protein eS8 from Sulfurisphaera tokodaii (strain DSM 16993 / JCM 10545 / NBRC 100140 / 7) (Sulfolobus tokodaii).